We begin with the raw amino-acid sequence, 236 residues long: ATP-dependent dethiobiotin synthetase BioD (236 aa).

T19 lines the Mg(2+) pocket. The active site involves K40. Residues D61 and E122 each contribute to the Mg(2+) site. Residues D61, 122–125, 182–183, and 211–213 each bind ATP; these read EGVG, NT, and PRL.

Belongs to the dethiobiotin synthetase family. In terms of assembly, homodimer. Requires Mg(2+) as cofactor.

Its subcellular location is the cytoplasm. The enzyme catalyses (7R,8S)-7,8-diammoniononanoate + CO2 + ATP = (4R,5S)-dethiobiotin + ADP + phosphate + 3 H(+). Its pathway is cofactor biosynthesis; biotin biosynthesis; biotin from 7,8-diaminononanoate: step 1/2. Functionally, catalyzes a mechanistically unusual reaction, the ATP-dependent insertion of CO2 between the N7 and N8 nitrogen atoms of 7,8-diaminopelargonic acid (DAPA, also called 7,8-diammoniononanoate) to form a ureido ring. In Janthinobacterium sp. (strain Marseille) (Minibacterium massiliensis), this protein is ATP-dependent dethiobiotin synthetase BioD.